The sequence spans 326 residues: Malate dehydrogenase (326 aa).

11–17 (GAAGQIG) serves as a coordination point for NAD(+). Positions 92 and 98 each coordinate substrate. NAD(+)-binding positions include Asn-105, Gln-112, and 129–131 (VGN). 2 residues coordinate substrate: Asn-131 and Arg-162. Catalysis depends on His-187, which acts as the Proton acceptor.

Belongs to the LDH/MDH superfamily. MDH type 2 family.

It carries out the reaction (S)-malate + NAD(+) = oxaloacetate + NADH + H(+). Functionally, catalyzes the reversible oxidation of malate to oxaloacetate. This is Malate dehydrogenase from Halorhodospira halophila (strain DSM 244 / SL1) (Ectothiorhodospira halophila (strain DSM 244 / SL1)).